The chain runs to 184 residues: Threonylcarbamoyl-AMP synthase (184 aa).

The region spanning 1 to 184 is the YrdC-like domain; it reads MNNLENIVEQ…IFTQHIFRQG (184 aa).

Belongs to the SUA5 family. TsaC subfamily.

It is found in the cytoplasm. It carries out the reaction L-threonine + hydrogencarbonate + ATP = L-threonylcarbamoyladenylate + diphosphate + H2O. Required for the formation of a threonylcarbamoyl group on adenosine at position 37 (t(6)A37) in tRNAs that read codons beginning with adenine. Catalyzes the conversion of L-threonine, HCO(3)(-)/CO(2) and ATP to give threonylcarbamoyl-AMP (TC-AMP) as the acyladenylate intermediate, with the release of diphosphate. The protein is Threonylcarbamoyl-AMP synthase of Actinobacillus pleuropneumoniae serotype 7 (strain AP76).